Consider the following 65-residue polypeptide: UPF0291 protein BBR47_33060 (65 aa).

The protein belongs to the UPF0291 family.

It is found in the cytoplasm. The protein is UPF0291 protein BBR47_33060 of Brevibacillus brevis (strain 47 / JCM 6285 / NBRC 100599).